The following is a 439-amino-acid chain: Trigger factor (439 aa).

One can recognise a PPIase FKBP-type domain in the interval G158–M233. The interval K410 to E439 is disordered. Residues A414–E428 are compositionally biased toward acidic residues.

This sequence belongs to the FKBP-type PPIase family. Tig subfamily.

The protein localises to the cytoplasm. The enzyme catalyses [protein]-peptidylproline (omega=180) = [protein]-peptidylproline (omega=0). Its function is as follows. Involved in protein export. Acts as a chaperone by maintaining the newly synthesized protein in an open conformation. Functions as a peptidyl-prolyl cis-trans isomerase. In Kosmotoga olearia (strain ATCC BAA-1733 / DSM 21960 / TBF 19.5.1), this protein is Trigger factor.